A 616-amino-acid polypeptide reads, in one-letter code: Dihydroxy-acid dehydratase (616 aa).

Asp-81 contributes to the Mg(2+) binding site. Residue Cys-122 coordinates [2Fe-2S] cluster. Mg(2+) is bound by residues Asp-123 and Lys-124. Lys-124 bears the N6-carboxylysine mark. Cys-195 contacts [2Fe-2S] cluster. Glu-491 lines the Mg(2+) pocket. The Proton acceptor role is filled by Ser-517.

It belongs to the IlvD/Edd family. Homodimer. Requires [2Fe-2S] cluster as cofactor. Mg(2+) is required as a cofactor.

It carries out the reaction (2R)-2,3-dihydroxy-3-methylbutanoate = 3-methyl-2-oxobutanoate + H2O. It catalyses the reaction (2R,3R)-2,3-dihydroxy-3-methylpentanoate = (S)-3-methyl-2-oxopentanoate + H2O. Its pathway is amino-acid biosynthesis; L-isoleucine biosynthesis; L-isoleucine from 2-oxobutanoate: step 3/4. It participates in amino-acid biosynthesis; L-valine biosynthesis; L-valine from pyruvate: step 3/4. In terms of biological role, functions in the biosynthesis of branched-chain amino acids. Catalyzes the dehydration of (2R,3R)-2,3-dihydroxy-3-methylpentanoate (2,3-dihydroxy-3-methylvalerate) into 2-oxo-3-methylpentanoate (2-oxo-3-methylvalerate) and of (2R)-2,3-dihydroxy-3-methylbutanoate (2,3-dihydroxyisovalerate) into 2-oxo-3-methylbutanoate (2-oxoisovalerate), the penultimate precursor to L-isoleucine and L-valine, respectively. In Methylocella silvestris (strain DSM 15510 / CIP 108128 / LMG 27833 / NCIMB 13906 / BL2), this protein is Dihydroxy-acid dehydratase.